Here is a 121-residue protein sequence, read N- to C-terminus: UPF0212 protein VNG_0879C (121 aa).

It belongs to the UPF0212 family.

The polypeptide is UPF0212 protein VNG_0879C (Halobacterium salinarum (strain ATCC 700922 / JCM 11081 / NRC-1) (Halobacterium halobium)).